The primary structure comprises 469 residues: Cysteine--tRNA ligase (469 aa).

Cysteine 29 is a Zn(2+) binding site. The 'HIGH' region motif lies at 31–41 (PTVYNYIHIGN). Residues cysteine 210, histidine 235, and glutamate 239 each coordinate Zn(2+). Positions 267–271 (KMSKS) match the 'KMSKS' region motif. Lysine 270 contributes to the ATP binding site.

The protein belongs to the class-I aminoacyl-tRNA synthetase family. In terms of assembly, monomer. The cofactor is Zn(2+).

The protein localises to the cytoplasm. The catalysed reaction is tRNA(Cys) + L-cysteine + ATP = L-cysteinyl-tRNA(Cys) + AMP + diphosphate. The chain is Cysteine--tRNA ligase from Thermosipho africanus (strain TCF52B).